Consider the following 47-residue polypeptide: Small, acid-soluble spore protein N (47 aa).

The disordered stretch occupies residues 1-47 (MSNPKRSPNHFAPNHIGTQPRAAGGNKGKQMQDQSGQHAQVIQTKGE). Polar residues predominate over residues 29–47 (KQMQDQSGQHAQVIQTKGE).

It belongs to the SspN family.

The protein resides in the spore core. This chain is Small, acid-soluble spore protein N, found in Geobacillus thermodenitrificans (strain NG80-2).